A 308-amino-acid chain; its full sequence is uncharacterized protein (308 aa).

Residues 191–211 form a helical membrane-spanning segment; it reads YLCLNLPYIIVALTLVPYSLV.

It localises to the host membrane. This is an uncharacterized protein from Saccharolobus islandicus (Sulfolobus islandicus).